Here is a 262-residue protein sequence, read N- to C-terminus: Expansin-A7 (262 aa).

An N-terminal signal peptide occupies residues 1–30 (MGPISSSWSFNKFFSIVFVVFAISGEFVAG). Residues 55–167 (GGACGYGNLF…RRVPCQRSGG (113 aa)) form the Expansin-like EG45 domain. Cystine bridges form between C58-C86, C89-C162, and C94-C100. Residues 177–257 (YWLLIFVMNV…NWSGGKTYKS (81 aa)) form the Expansin-like CBD domain.

Belongs to the expansin family. Expansin A subfamily.

It localises to the secreted. The protein resides in the cell wall. Its subcellular location is the membrane. In terms of biological role, causes loosening and extension of plant cell walls by disrupting non-covalent bonding between cellulose microfibrils and matrix glucans. No enzymatic activity has been found. The polypeptide is Expansin-A7 (EXPA7) (Arabidopsis thaliana (Mouse-ear cress)).